Reading from the N-terminus, the 92-residue chain is uncharacterized protein (92 aa).

This is an uncharacterized protein from Archaeoglobus fulgidus (strain ATCC 49558 / DSM 4304 / JCM 9628 / NBRC 100126 / VC-16).